The primary structure comprises 427 residues: Clusterin-associated protein 1 homolog (427 aa).

Residues 202 to 307 (LLNNVSSDEA…LKEEEKRLMR (106 aa)) are a coiled coil. The span at 300 to 313 (EEEKRLMRSGVARD) shows a compositional bias: basic and acidic residues. Residues 300–427 (EEEKRLMRSG…QILEESDNDF (128 aa)) are disordered. 2 stretches are compositionally biased toward acidic residues: residues 314–332 (EDSD…DIDD) and 363–400 (SEET…DNDS).

Belongs to the CLUAP1 family.

The protein resides in the nucleus. It is found in the cell projection. It localises to the cilium. In terms of biological role, required for cilia biogenesis and maintenance in the kidney, the lateral line organ and eye. Appears to function within the multiple intraflagellar transport complex B (IFT-B). In Danio rerio (Zebrafish), this protein is Clusterin-associated protein 1 homolog (cluap1).